We begin with the raw amino-acid sequence, 297 residues long: Protein PecM (297 aa).

The next 10 helical transmembrane spans lie at 6 to 26 (FAFYAPCVWGTTYFVTTQFLP), 38 to 58 (ALPAGIILILGKNLPPVGWLW), 60 to 80 (LFVLGALNIGVFFVMLFFAAY), 86 to 106 (VVALVGSLQPLIVILLSFLLL), 116 to 136 (VAAVAGGIGIVLLISLPKAPL), 138 to 158 (PAGLVASALATMSMASGLVLT), 167 to 187 (MTMLTFTGWQLFCGGLVILPV), 203 to 223 (LAGYLYLAIPGSLLAYFMWFS), 231 to 251 (VIMSLLGFLSPLVALLLGFLF), and 261 to 281 (LVGVVFIFSALIIVQDISLFS). EamA domains are found at residues 12–130 (CVWG…LLIS) and 149–276 (MSMA…IVQD).

Belongs to the EamA transporter family.

The protein resides in the cell membrane. Its function is as follows. Involved in pectinase, cellulase, and blue pigment regulation. This is Protein PecM (pecM) from Dickeya dadantii (strain 3937) (Erwinia chrysanthemi (strain 3937)).